The sequence spans 37 residues: MKVRPSVKKLCPKCKIIRRHGVVRVICDNPRHKQRQG.

Belongs to the bacterial ribosomal protein bL36 family.

In Solidesulfovibrio magneticus (strain ATCC 700980 / DSM 13731 / RS-1) (Desulfovibrio magneticus), this protein is Large ribosomal subunit protein bL36.